The chain runs to 61 residues: MAKKSMIAKAQRPPKFKVRKYNRCKICGRPRAYLRDFGMCRICFRKLAHQGEIPGVKKASW.

Zn(2+)-binding residues include Cys-24, Cys-27, Cys-40, and Cys-43.

Belongs to the universal ribosomal protein uS14 family. Zinc-binding uS14 subfamily. Part of the 30S ribosomal subunit. Contacts proteins S3 and S10. It depends on Zn(2+) as a cofactor.

Its function is as follows. Binds 16S rRNA, required for the assembly of 30S particles and may also be responsible for determining the conformation of the 16S rRNA at the A site. This chain is Small ribosomal subunit protein uS14, found in Carboxydothermus hydrogenoformans (strain ATCC BAA-161 / DSM 6008 / Z-2901).